The chain runs to 575 residues: Potassium-transporting ATPase potassium-binding subunit (575 aa).

The next 12 membrane-spanning stretches (helical) occupy residues 3-23 (FEGV…VPFF), 69-89 (AVLA…LLQG), 136-156 (CFQF…IAFI), 178-198 (ILMP…VPQS), 266-286 (LLEI…FGVL), 293-313 (GWVL…VAAL), 340-360 (FGWA…TGAV), 367-387 (LTPL…IWGG), 391-411 (GIAY…LMVG), 431-451 (IIFL…LAIP), 498-518 (VVLL…AGGL), and 543-563 (AGTI…LGPI).

The protein belongs to the KdpA family. The system is composed of three essential subunits: KdpA, KdpB and KdpC.

It is found in the cell inner membrane. In terms of biological role, part of the high-affinity ATP-driven potassium transport (or Kdp) system, which catalyzes the hydrolysis of ATP coupled with the electrogenic transport of potassium into the cytoplasm. This subunit binds the periplasmic potassium ions and delivers the ions to the membrane domain of KdpB through an intramembrane tunnel. This is Potassium-transporting ATPase potassium-binding subunit from Gloeobacter violaceus (strain ATCC 29082 / PCC 7421).